The chain runs to 348 residues: Protein RecA (348 aa).

67-74 provides a ligand contact to ATP; it reads GPESSGKT.

Belongs to the RecA family.

It is found in the cytoplasm. Its function is as follows. Can catalyze the hydrolysis of ATP in the presence of single-stranded DNA, the ATP-dependent uptake of single-stranded DNA by duplex DNA, and the ATP-dependent hybridization of homologous single-stranded DNAs. It interacts with LexA causing its activation and leading to its autocatalytic cleavage. This chain is Protein RecA, found in Cutibacterium acnes (Propionibacterium acnes).